The chain runs to 71 residues: Large ribosomal subunit protein uL29 (71 aa).

Positions 32 to 51 are disordered; the sequence is GVNKSTGGAPSNPGKISETK.

This sequence belongs to the universal ribosomal protein uL29 family.

In Methanococcus maripaludis (strain DSM 14266 / JCM 13030 / NBRC 101832 / S2 / LL), this protein is Large ribosomal subunit protein uL29.